Here is a 116-residue protein sequence, read N- to C-terminus: Large ribosomal subunit protein bL19 (116 aa).

It belongs to the bacterial ribosomal protein bL19 family.

Functionally, this protein is located at the 30S-50S ribosomal subunit interface and may play a role in the structure and function of the aminoacyl-tRNA binding site. This Ectopseudomonas mendocina (strain ymp) (Pseudomonas mendocina) protein is Large ribosomal subunit protein bL19.